A 94-amino-acid chain; its full sequence is Co-chaperonin GroES (94 aa).

It belongs to the GroES chaperonin family. In terms of assembly, heptamer of 7 subunits arranged in a ring. Interacts with the chaperonin GroEL.

It is found in the cytoplasm. Its function is as follows. Together with the chaperonin GroEL, plays an essential role in assisting protein folding. The GroEL-GroES system forms a nano-cage that allows encapsulation of the non-native substrate proteins and provides a physical environment optimized to promote and accelerate protein folding. GroES binds to the apical surface of the GroEL ring, thereby capping the opening of the GroEL channel. This is Co-chaperonin GroES from Lactococcus lactis subsp. lactis (strain IL1403) (Streptococcus lactis).